The following is a 652-amino-acid chain: DNA ligase (652 aa).

NAD(+) is bound by residues 29–33 (DAEYD), 78–79 (SL), and glutamate 107. Lysine 109 (N6-AMP-lysine intermediate) is an active-site residue. Residues arginine 130, glutamate 164, lysine 278, and lysine 302 each contribute to the NAD(+) site. Zn(2+) is bound by residues cysteine 395, cysteine 398, cysteine 413, and cysteine 418. The BRCT domain occupies 577–652 (TDDAILSGKT…VKDEAWLLDL (76 aa)).

Belongs to the NAD-dependent DNA ligase family. LigA subfamily. It depends on Mg(2+) as a cofactor. Mn(2+) serves as cofactor.

It catalyses the reaction NAD(+) + (deoxyribonucleotide)n-3'-hydroxyl + 5'-phospho-(deoxyribonucleotide)m = (deoxyribonucleotide)n+m + AMP + beta-nicotinamide D-nucleotide.. DNA ligase that catalyzes the formation of phosphodiester linkages between 5'-phosphoryl and 3'-hydroxyl groups in double-stranded DNA using NAD as a coenzyme and as the energy source for the reaction. It is essential for DNA replication and repair of damaged DNA. The sequence is that of DNA ligase from Streptococcus thermophilus (strain ATCC BAA-491 / LMD-9).